The following is a 775-amino-acid chain: Kazrin (775 aa).

The tract at residues A38–N66 is disordered. The span at G51–A64 shows a compositional bias: low complexity. The stretch at A74–K256 forms a coiled coil. Residues R174–T333 are interaction with PPL. The tract at residues Q290–E427 is disordered. Residues S352, S367, and S387 each carry the phosphoserine modification. Polar residues predominate over residues S411–L422. SAM domains lie at W446–A511, D524–V588, and W612–F679. Disordered stretches follow at residues R688 to L715 and R729 to C762. The segment covering S732 to Y742 has biased composition (basic and acidic residues).

The protein belongs to the kazrin family. As to quaternary structure, isoform 2, isoform 3 and isoform 4 interact with PPL N-terminus. In terms of tissue distribution, isoform 2, isoform 3 and isoform 4 are expressed in several cell lines including keratinocytes and bladder and epidermoid carcinoma (at protein level). Isoform 2, isoform 3 and isoform 4 are expressed in hair follicle and interfollicular epidermis (at protein level).

It is found in the cytoplasm. Its subcellular location is the cytoskeleton. The protein resides in the cell junction. The protein localises to the desmosome. It localises to the nucleus. Component of the cornified envelope of keratinocytes. May be involved in the interplay between adherens junctions and desmosomes. The function in the nucleus is not known. This Homo sapiens (Human) protein is Kazrin.